The primary structure comprises 207 residues: Glutathione S-transferase 4 (207 aa).

The 78-residue stretch at 2 to 79 (PNYKLLYFDA…YLARKFGLAG (78 aa)) folds into the GST N-terminal domain. Residues Y8, W39, K43, 49–51 (GQL), and 63–64 (QS) each bind glutathione. Residues 81–207 (TAEEEAYADS…YVATRKDSIV (127 aa)) enclose the GST C-terminal domain.

It belongs to the GST superfamily. Sigma family.

It carries out the reaction RX + glutathione = an S-substituted glutathione + a halide anion + H(+). Functionally, conjugation of reduced glutathione to a wide number of exogenous and endogenous hydrophobic electrophiles. May play a role in the detoxification of reactive oxygen species produced during pathogenic bacterial infection. This Caenorhabditis elegans protein is Glutathione S-transferase 4.